Here is a 239-residue protein sequence, read N- to C-terminus: Putative CCR4-associated factor 1 homolog 8 (239 aa).

4 residues coordinate a divalent metal cation: aspartate 17, glutamate 19, aspartate 133, and asparagine 204.

The protein belongs to the CAF1 family. In terms of assembly, component of the CCR4-NOT complex, at least composed of CRR4 and CAF1 proteins. It depends on a divalent metal cation as a cofactor.

It localises to the nucleus. Its subcellular location is the cytoplasm. The enzyme catalyses Exonucleolytic cleavage of poly(A) to 5'-AMP.. Its function is as follows. Ubiquitous transcription factor required for a diverse set of processes. It is a component of the CCR4 complex involved in the control of gene expression. The polypeptide is Putative CCR4-associated factor 1 homolog 8 (CAF1-8) (Arabidopsis thaliana (Mouse-ear cress)).